The sequence spans 347 residues: Homoisocitrate dehydrogenase (347 aa).

I68 to S70 contributes to the NADH binding site. S70 contacts (2R,3S)-homoisocitrate. S81 is subject to Phosphoserine. (2R,3S)-homoisocitrate-binding residues include R87, R97, R128, Y135, K181, and N183. NADH is bound at residue N183. D213, D237, and D241 together coordinate Mg(2+). NADH-binding positions include G270–D274 and N282.

The protein belongs to the isocitrate and isopropylmalate dehydrogenases family. Mg(2+) serves as cofactor.

It catalyses the reaction (2R,3S)-homoisocitrate + NAD(+) = 2-oxoadipate + CO2 + NADH. The catalysed reaction is (2R,3S)-iso(homo)2citrate + NAD(+) = 2-oxoheptanedioate + CO2 + NADH. It carries out the reaction (2R,3S)-iso(homo)3citrate + NAD(+) = 2-oxosuberate + CO2 + NADH. The protein operates within organic acid metabolism; 2-oxosuberate biosynthesis. Functionally, catalyzes the NAD-dependent oxidation and decarboxylation of (2R,3S)-homoisocitrate, (2R,3S)-homo(2)-isocitrate and (2R,3S)-homo(3)-isocitrate, into 2-oxoadipate, 2-oxopimelate (2-oxoheptanedioate), and 2-oxosuberate, respectively. All these substrates are intermediates in the biosynthesis of biotin and of 7-mercaptoheptanoate, a moiety of coenzyme B in methanoarchaea. Is also able to produce 2-oxoazelate from (2R,3S)-homo(4)-isocitrate in vitro, but this substrate is probably not physiologically relevant. Is unable to use any isomer of isocitrate or isopropylmalate as a substrate, and NADP as an oxidant. The protein is Homoisocitrate dehydrogenase (aksF) of Methanocaldococcus jannaschii (strain ATCC 43067 / DSM 2661 / JAL-1 / JCM 10045 / NBRC 100440) (Methanococcus jannaschii).